Consider the following 426-residue polypeptide: Serine hydroxymethyltransferase (426 aa).

(6S)-5,6,7,8-tetrahydrofolate-binding positions include L115 and 119 to 121 (GHI). Position 225 is an N6-(pyridoxal phosphate)lysine (K225).

The protein belongs to the SHMT family. Homodimer. The cofactor is pyridoxal 5'-phosphate.

The protein localises to the cytoplasm. The protein operates within amino-acid biosynthesis; glycine biosynthesis; glycine from L-serine: step 1/1. In terms of biological role, catalyzes the reversible interconversion of serine and glycine with a modified folate serving as the one-carbon carrier. Also exhibits a pteridine-independent aldolase activity toward beta-hydroxyamino acids, producing glycine and aldehydes, via a retro-aldol mechanism. The polypeptide is Serine hydroxymethyltransferase (Thermoplasma volcanium (strain ATCC 51530 / DSM 4299 / JCM 9571 / NBRC 15438 / GSS1)).